The following is a 752-amino-acid chain: Kaurene synthase like 2, chloroplastic (752 aa).

The transit peptide at 1-28 (MSLLLSNSALVGPKFRSSRISHASASLD) directs the protein to the chloroplast. Residues Asp538, Asp542, Asn682, and Glu690 each coordinate Mg(2+). Residues 538–542 (DDLFD) carry the DDXXD motif motif.

Belongs to the terpene synthase family. Requires Mg(2+) as cofactor. As to expression, highly expressed in leaves.

It is found in the plastid. It localises to the chloroplast. It participates in secondary metabolite biosynthesis; terpenoid biosynthesis. Functionally, involved in the biosynthesis of ent-kaurene diterpenoids natural products such as oridonin, miltiradiene, eriocalyxin B and nezukol, known to exhibit antitumor, anti-inflammatory and antibacterial activities. Catalyzes the conversion of ent-copalyl diphosphate (ent-CPP) to ent-isopimaradiene like compounds. The chain is Kaurene synthase like 2, chloroplastic from Isodon rubescens (Rabdosia rubescens).